Here is a 444-residue protein sequence, read N- to C-terminus: Platelet-activating factor acetylhydrolase (444 aa).

Residues 1–21 form the signal peptide; the sequence is MLPPKLHALFCLCSCLTLVHP. N60 and N200 each carry an N-linked (GlcNAc...) asparagine glycan. The Nucleophile role is filled by S274. Catalysis depends on charge relay system residues D297 and H352. N-linked (GlcNAc...) asparagine glycosylation occurs at N424.

Belongs to the AB hydrolase superfamily. Lipase family. In terms of processing, N-glycosylated. Plasma.

The protein resides in the secreted. Its subcellular location is the extracellular space. The enzyme catalyses a 1-O-alkyl-2-acetyl-sn-glycero-3-phosphocholine + H2O = a 1-O-alkyl-sn-glycero-3-phosphocholine + acetate + H(+). It carries out the reaction 1-O-decyl-2-acetyl-sn-glycero-3-phosphocholine + H2O = 1-O-decyl-sn-glycero-3-phosphocholine + acetate + H(+). It catalyses the reaction 1-O-dodecyl-2-acetyl-sn-glycero-3-phosphocholine + H2O = 1-O-dodecyl-sn-glycero-3-phosphocholine + acetate + H(+). The catalysed reaction is 1-O-tetradecyl-2-acetyl-sn-glycero-3-phosphocholine + H2O = 1-O-tetradecyl-sn-glycero-3-phosphocholine + acetate + H(+). The enzyme catalyses 1-O-hexadecyl-2-acetyl-sn-glycero-3-phosphocholine + H2O = 1-O-hexadecyl-sn-glycero-3-phosphocholine + acetate + H(+). It carries out the reaction 1-O-octadecyl-2-acetyl-sn-glycero-3-phosphocholine + H2O = 1-O-octadecyl-sn-glycero-3-phosphocholine + acetate + H(+). It catalyses the reaction 1-hexadecanoyl-2-acetyl-sn-glycero-3-phosphocholine + H2O = 1-hexadecanoyl-sn-glycero-3-phosphocholine + acetate + H(+). The catalysed reaction is 1-hexadecanoyl-2-propionyl-sn-glycero-3-phosphocholine + H2O = propanoate + 1-hexadecanoyl-sn-glycero-3-phosphocholine + H(+). The enzyme catalyses 1-hexadecanoyl-2-butanoyl-sn-glycero-3-phosphocholine + H2O = butanoate + 1-hexadecanoyl-sn-glycero-3-phosphocholine + H(+). It carries out the reaction 1-hexadecanoyl-2-pentanoyl-sn-glycero-3-phosphocholine + H2O = pentanoate + 1-hexadecanoyl-sn-glycero-3-phosphocholine + H(+). It catalyses the reaction 1-hexadecanoyl-2-glutaroyl-sn-glycero-3-phosphocholine + H2O = glutarate + 1-hexadecanoyl-sn-glycero-3-phosphocholine + H(+). The catalysed reaction is 1-hexadecanoyl-2-(5-oxopentanoyl)-sn-glycero-3-phosphocholine + H2O = 5-oxopentanoate + 1-hexadecanoyl-sn-glycero-3-phosphocholine + H(+). The enzyme catalyses 1-hexadecanoyl-2-(9-oxononanoyl)-sn-glycero-3-phosphocholine + H2O = 9-oxononanoate + 1-hexadecanoyl-sn-glycero-3-phosphocholine + H(+). It carries out the reaction 1-hexadecanoyl-2-[9-hydroperoxy-(10E-octadecenoyl)]-sn-glycero-3-phosphocholine + H2O = 9-hydroperoxy-10E-octadecenoate + 1-hexadecanoyl-sn-glycero-3-phosphocholine + H(+). It catalyses the reaction 1-hexadecanoyl-2-(10-hydroperoxy-8E-octadecenoyl)-sn-glycero-3-phosphocholine + H2O = 10-hydroperoxy-(8E)-octadecenoate + 1-hexadecanoyl-sn-glycero-3-phosphocholine + H(+). Lipoprotein-associated calcium-independent phospholipase A2 involved in phospholipid catabolism during inflammatory and oxidative stress response. At the lipid-aqueous interface, hydrolyzes the ester bond of fatty acyl group attached at sn-2 position of phospholipids (phospholipase A2 activity). Specifically targets phospholipids with a short-chain fatty acyl group at sn-2 position. Can hydrolyze phospholipids with long fatty acyl chains, only if they carry oxidized functional groups. Hydrolyzes and inactivates platelet-activating factor (PAF, 1-O-alkyl-2-acetyl-sn-glycero-3-phosphocholine), a potent pro-inflammatory signaling lipid that acts through PTAFR on various innate immune cells. Hydrolyzes oxidatively truncated phospholipids carrying an aldehyde group at omega position, preventing their accumulation in low-density lipoprotein (LDL) particles and uncontrolled pro-inflammatory effects. As part of high-density lipoprotein (HDL) particles, can hydrolyze phospholipids having long-chain fatty acyl hydroperoxides at sn-2 position and protect against potential accumulation of these oxylipins in the vascular wall. Catalyzes the release from membrane phospholipids of F2-isoprostanes, lipid biomarkers of cellular oxidative damage. The protein is Platelet-activating factor acetylhydrolase (PLA2G7) of Canis lupus familiaris (Dog).